The chain runs to 332 residues: L-lactate dehydrogenase A chain (332 aa).

Residue Ala2 is modified to N-acetylalanine. Lys5 is modified (N6-acetyllysine; alternate). Lys5 bears the N6-succinyllysine; alternate mark. Lys14 is modified (N6-acetyllysine). Thr18 carries the post-translational modification Phosphothreonine. 29–57 (GAVGMACAISILMKDLADELALVDVIEDK) provides a ligand contact to NAD(+). Lys57 is modified (N6-acetyllysine; alternate). Lys57 is covalently cross-linked (Glycyl lysine isopeptide (Lys-Gly) (interchain with G-Cter in SUMO2); alternate). At Lys81 the chain carries N6-acetyllysine. Residue Arg99 coordinates NAD(+). Residue Arg106 coordinates substrate. N6-acetyllysine; alternate is present on Lys118. Position 118 is an N6-succinyllysine; alternate (Lys118). An N6-acetyllysine modification is found at Lys126. Asn138 provides a ligand contact to NAD(+). Substrate-binding residues include Asn138 and Arg169. The active-site Proton acceptor is His193. 2 positions are modified to N6-acetyllysine: Lys224 and Lys232. At Tyr239 the chain carries Phosphotyrosine. At Lys243 the chain carries N6-acetyllysine. A substrate-binding site is contributed by Thr248. Thr309 carries the post-translational modification Phosphothreonine. At Lys318 the chain carries N6-acetyllysine; alternate. Position 318 is an N6-succinyllysine; alternate (Lys318). A Phosphothreonine modification is found at Thr322.

It belongs to the LDH/MDH superfamily. LDH family. As to quaternary structure, homotetramer. Interacts with PTEN upstream reading frame protein MP31. In terms of processing, ISGylated.

It is found in the cytoplasm. It catalyses the reaction (S)-lactate + NAD(+) = pyruvate + NADH + H(+). Its pathway is fermentation; pyruvate fermentation to lactate; (S)-lactate from pyruvate: step 1/1. In terms of biological role, interconverts simultaneously and stereospecifically pyruvate and lactate with concomitant interconversion of NADH and NAD(+). In Macaca fascicularis (Crab-eating macaque), this protein is L-lactate dehydrogenase A chain (LDHA).